We begin with the raw amino-acid sequence, 361 residues long: Velvet complex subunit B (361 aa).

A Velvet domain is found at 1–336 (MIVRTEDQKL…GNQGQKLPLR (336 aa)). 2 disordered regions span residues 42 to 222 (PSST…NNIP) and 327 to 361 (GNQGQKLPLRNRHGTGSKRRRRNQSGSEGESEDDS). 2 stretches are compositionally biased toward low complexity: residues 57–74 (PSASTTRRRTISSSSRPP) and 93–107 (PPSSNGSGYYPSQSQ). The span at 108–127 (DNLTPSSPYPPHSNSEQPQT) shows a compositional bias: polar residues. Residues 130–147 (YPPPPPIDRAAPFPPPVL) show a composition bias toward pro residues. Polar residues-rich tracts occupy residues 149 to 168 (SIQSFNRTASGDWNPSNNDD), 181 to 196 (GYTNNAQPDQPTYGSG), and 212 to 222 (SGNATPQNNIP). Positions 335 to 349 (LRNRHGTGSKRRRRN) are enriched in basic residues.

The protein belongs to the velvet family. VelB subfamily. In terms of assembly, component of the heterotrimeric velvet complex composed of laeA, veA and velB; VeA acting as a bridging protein between laeA and velB. Forms a heterodimeric complex with vosA; the formation of the velB-vosA complex is light-dependent.

Its subcellular location is the nucleus. The protein localises to the cytoplasm. Component of the velvet transcription factor complex that controls sexual/asexual developmental ratio in response to light, promoting sexual development in the darkness while stimulating asexual sporulation under illumination. The velvet complex acts as a global regulator for secondary metabolite gene expression. Component of the velB-VosA heterodimeric complex that plays a dual role in activating genes associated with spore maturation and repressing certain development-associated genes. The velB-VosA complex binds DNA through the DNA-binding domain of vosA that recognizes an 11-nucleotide consensus sequence 5'-CTGGCCGCGGC-3' consisting of two motifs in the promoters of key developmental regulatory genes. This Coprinopsis cinerea (strain Okayama-7 / 130 / ATCC MYA-4618 / FGSC 9003) (Inky cap fungus) protein is Velvet complex subunit B.